Reading from the N-terminus, the 62-residue chain is Bowman-Birk type proteinase inhibitor B7 (62 aa).

Cystine bridges form between Cys-5-Cys-59, Cys-6-Cys-23, Cys-13-Cys-21, Cys-30-Cys-37, and Cys-34-Cys-51.

Belongs to the Bowman-Birk serine protease inhibitor family. In terms of tissue distribution, expressed in bulb (at protein level).

Serine protease inhibitor. Inhibits trypsin (Ki = 65 nM) and weakly inhibits chymotrypsin (Ki = 295 nM). Does not inhibit bacterial subtilisin. This chain is Bowman-Birk type proteinase inhibitor B7, found in Hyacinthus orientalis (Common hyacinth).